A 245-amino-acid polypeptide reads, in one-letter code: NAD(P)H-quinone oxidoreductase subunit K (245 aa).

[4Fe-4S] cluster is bound by residues C58, C59, C123, and C154.

It belongs to the complex I 20 kDa subunit family. In terms of assembly, NDH-1 can be composed of about 15 different subunits; different subcomplexes with different compositions have been identified which probably have different functions. It depends on [4Fe-4S] cluster as a cofactor.

The protein localises to the cellular thylakoid membrane. It carries out the reaction a plastoquinone + NADH + (n+1) H(+)(in) = a plastoquinol + NAD(+) + n H(+)(out). The enzyme catalyses a plastoquinone + NADPH + (n+1) H(+)(in) = a plastoquinol + NADP(+) + n H(+)(out). In terms of biological role, NDH-1 shuttles electrons from an unknown electron donor, via FMN and iron-sulfur (Fe-S) centers, to quinones in the respiratory and/or the photosynthetic chain. The immediate electron acceptor for the enzyme in this species is believed to be plastoquinone. Couples the redox reaction to proton translocation, and thus conserves the redox energy in a proton gradient. Cyanobacterial NDH-1 also plays a role in inorganic carbon-concentration. In Nostoc sp. (strain PCC 7120 / SAG 25.82 / UTEX 2576), this protein is NAD(P)H-quinone oxidoreductase subunit K.